The following is an 853-amino-acid chain: Trimethylguanosine synthase (853 aa).

The segment at 54 to 84 (NNAGDQGTEEEEDGHSNGTAESHSPNESDLD) is disordered. Residue T61 is modified to Phosphothreonine. Over residues 69–80 (SNGTAESHSPNE) the composition is skewed to polar residues. 4 positions are modified to phosphoserine: S81, S85, S92, and S139. A Phosphotyrosine modification is found at Y144. S152 carries the post-translational modification Phosphoserine. 2 disordered regions span residues 328–437 (VEQS…DDNG) and 523–549 (ETSQ…QDMS). The segment covering 365–383 (KENDISENRSSDQPAKELQ) has biased composition (basic and acidic residues). Phosphoserine is present on residues S405 and S431. A compositionally biased stretch (acidic residues) spans 424-435 (DVDENPDSEVDD). Polar residues predominate over residues 526–541 (QDSLSQNKMQDTCTSS). At S572 the chain carries Phosphoserine. Residues 594–623 (CSTEEIPNSPHAETEVEIKKKKKKNKNKKI) are disordered. Over residues 612–621 (KKKKKKNKNK) the composition is skewed to basic residues. Residue D711 coordinates S-adenosyl-L-methionine.

The protein belongs to the methyltransferase superfamily. Trimethylguanosine synthase family. In terms of assembly, may form homooligomers. Interacts with CREBBP/CBP, EED/WAIT1, EP300/P300, NCOA6/PRIP, PPARBP/PBP and SMN. As to expression, ubiquitously expressed.

Its subcellular location is the cytoplasm. It is found in the nucleus. The protein resides in the cajal body. It localises to the nucleolus. The catalysed reaction is a 5'-end (N(7)-methyl 5'-triphosphoguanosine)-ribonucleoside in snRNA + S-adenosyl-L-methionine = a 5'-end (N(2),N(7)-dimethyl 5'-triphosphoguanosine)-ribonucleoside in snRNA + S-adenosyl-L-homocysteine + H(+). The enzyme catalyses a 5'-end (N(7)-methyl 5'-triphosphoguanosine)-ribonucleoside in snoRNA + S-adenosyl-L-methionine = a 5'-end (N(2),N(7)-dimethyl 5'-triphosphoguanosine)-ribonucleoside in snoRNA + S-adenosyl-L-homocysteine + H(+). It catalyses the reaction a 5'-end (N(2),N(7)-dimethyl 5'-triphosphoguanosine)-ribonucleoside in snRNA + S-adenosyl-L-methionine = a 5'-end (N(2),N(2),N(7)-trimethyl 5'-triphosphoguanosine)-ribonucleoside in snRNA + S-adenosyl-L-homocysteine + H(+). It carries out the reaction a 5'-end (N(2),N(7)-dimethyl 5'-triphosphoguanosine)-ribonucleoside in snoRNA + S-adenosyl-L-methionine = a 5'-end (N(2),N(2),N(7)-trimethyl 5'-triphosphoguanosine)-ribonucleoside in snoRNA + S-adenosyl-L-homocysteine + H(+). In terms of biological role, catalyzes the 2 serial methylation steps for the conversion of the 7-monomethylguanosine (m(7)G) caps of snRNAs and snoRNAs to a 2,2,7-trimethylguanosine (m(2,2,7)G) cap structure. The enzyme is specific for guanine, and N7 methylation must precede N2 methylation. Hypermethylation of the m7G cap of U snRNAs leads to their concentration in nuclear foci, their colocalization with coilin and the formation of canonical Cajal bodies (CBs). Plays a role in transcriptional regulation. This is Trimethylguanosine synthase (Tgs1) from Mus musculus (Mouse).